Here is a 558-residue protein sequence, read N- to C-terminus: GPI mannosyltransferase 3 (558 aa).

A run of 4 helical transmembrane segments spans residues 53 to 73, 81 to 101, 164 to 184, and 190 to 210; these read GLRS…LKLL, VWFA…VSVF, AYCG…LLTL, and VPFL…AVVL. Asparagine 220 carries N-linked (GlcNAc...) asparagine glycosylation. The chain crosses the membrane as a helical span at residues 234 to 254; the sequence is IVLTGLIVLVAVLGGVMVLDY. A glycan (N-linked (GlcNAc...) asparagine) is linked at asparagine 275. Transmembrane regions (helical) follow at residues 292 to 312, 323 to 343, 348 to 368, and 372 to 392; these read VLVG…LVLW, PVLG…LIDH, FVFV…VRWS, and AVVV…IYLM.

It belongs to the glycosyltransferase 22 family. PIGB subfamily.

Its subcellular location is the endoplasmic reticulum membrane. Its pathway is glycolipid biosynthesis; glycosylphosphatidylinositol-anchor biosynthesis. Its function is as follows. Mannosyltransferase involved in glycosylphosphatidylinositol-anchor biosynthesis. Transfers the third alpha-1,2-mannose to Man2-GlcN-acyl-PI during GPI precursor assembly. This chain is GPI mannosyltransferase 3 (GPI10), found in Trypanosoma brucei brucei.